Consider the following 438-residue polypeptide: MSEPSKEELLARIAQLELENEQLKQQNGKKSQHEQFNKIDDNFSLDEYKRYGRQMIVPQFGSLESQIKLKNSKVLVVGAGGLGSPALLYLSSAGIGKIGIIDPDTVDTSNLHRQVIHNTEMVGEFKCISAQNYINKLNPHVVVEVYPTALNNDNAFGIVSQYDLVLDCTDHPAVRYLINDVCVLLGKTIVSGSGLKSDGQLTVLNFANSGPCYRCFYPQPPSPDSVTSCSDGGVIGPAIGLVGVAMAVETIKIITGYYTKDNFVPFLASYSAYPQQQLRVFKMRKRQKDCAVCGENPQISQRMIEDGTINYKTFCGRATFDPIDDKFRVSPKDYDSVVQNKKKHILIDVRPREQFQITHLPNAINVQWDPTFRKADAIEQYLPDDSTKDDEIYVVCRFGNDSQLAAKKLIGMGYPNVRDIIGGLDKWSDDVDSKIPKY.

ATP contacts are provided by residues Gly-81, Asp-102, 109–113, Lys-126, and 170–171; these read SNLHR and DH. 2 residues coordinate Zn(2+): Cys-212 and Cys-215. Cys-229 functions as the Glycyl thioester intermediate; for adenylyltransferase activity in the catalytic mechanism. Cys-290 and Cys-293 together coordinate Zn(2+). In terms of domain architecture, Rhodanese spans 340–436; that stretch reads NKKKHILIDV…WSDDVDSKIP (97 aa). Cys-396 (cysteine persulfide intermediate; for sulfurtransferase activity) is an active-site residue.

It in the N-terminal section; belongs to the HesA/MoeB/ThiF family. UBA4 subfamily. Requires Zn(2+) as cofactor.

It is found in the cytoplasm. The protein resides in the cytosol. It functions in the pathway tRNA modification; 5-methoxycarbonylmethyl-2-thiouridine-tRNA biosynthesis. Functionally, plays a central role in 2-thiolation of mcm(5)S(2)U at tRNA wobble positions of cytosolic tRNA(Lys), tRNA(Glu) and tRNA(Gln). Acts by mediating the C-terminal thiocarboxylation of sulfur carrier URM1. Its N-terminus first activates URM1 as acyl-adenylate (-COAMP), then the persulfide sulfur on the catalytic cysteine is transferred to URM1 to form thiocarboxylation (-COSH) of its C-terminus. The reaction probably involves hydrogen sulfide that is generated from the persulfide intermediate and that acts as a nucleophile towards URM1. Subsequently, a transient disulfide bond is formed. Does not use thiosulfate as sulfur donor; NFS1 probably acting as a sulfur donor for thiocarboxylation reactions. Prior mcm(5) tRNA modification by the elongator complex is required for 2-thiolation. May also be involved in protein urmylation. This chain is Adenylyltransferase and sulfurtransferase UBA4, found in Candida albicans (strain SC5314 / ATCC MYA-2876) (Yeast).